A 4485-amino-acid polypeptide reads, in one-letter code: Dynein gamma chain, flagellar outer arm (4485 aa).

Residues 1 to 1780 (MALDNRHRLI…IISICDVDFE (1780 aa)) form a stem region. Coiled coils occupy residues 449 to 469 (IEGL…VKRK), 804 to 838 (VEQN…VRNY), 1093 to 1114 (VRNV…DNLI), 1275 to 1297 (DVVE…SKKL), and 1699 to 1727 (KKVD…NLET). AAA stretches follow at residues 1781 to 2002 (YSFE…VLRT), 2061 to 2279 (KDAE…ISLK), 2384 to 2638 (TYPK…VFQG), and 2763 to 3013 (KFNE…YRRY). Residues 1819–1826 (GPAGTGKT), 2099–2106 (GPSGSGKS), 2425–2432 (GGPGTAKT), and 2802–2809 (GVGGSGKQ) each bind ATP. Coiled coils occupy residues 3077-3099 (AKEA…KEKQ), 3196-3227 (EAQK…ELLE), 3265-3343 (KVVE…LAGE), and 3569-3663 (EDQL…EEYR). Residues 3077–3343 (AKEAEALLKQ…NALIGALAGE (267 aa)) are stalk. 2 AAA regions span residues 3412–3643 (LVDD…DVSE) and 3857–4071 (AADY…FLQN).

Belongs to the dynein heavy chain family. As to quaternary structure, consists of at least 3 heavy chains (alpha, beta and gamma), 2 intermediate chains and 8 light chains.

It localises to the cell projection. Its subcellular location is the cilium. It is found in the flagellum. The protein resides in the cytoplasm. The protein localises to the cytoskeleton. It localises to the flagellum axoneme. In terms of biological role, force generating protein of eukaryotic cilia and flagella. Produces force towards the minus ends of microtubules. Dynein has ATPase activity; the force-producing power stroke is thought to occur on release of ADP. This chain is Dynein gamma chain, flagellar outer arm (ODA2), found in Chlamydomonas reinhardtii (Chlamydomonas smithii).